We begin with the raw amino-acid sequence, 138 residues long: MKIIRFGVSVPEELLEKFDQIIAEKGYVNRSEAIRDLMRDFIVRHEWEAGDKEVAGTITMLYNHDEADVVKELLDLQHDYLNEIISSIHVHMDEHNCLEVVIVKGKAKRIKEIADRLLSLKGVKHGKLVMTGTGKELV.

Residues His78, His89, His91, and Cys97 each coordinate Ni(2+).

The protein belongs to the transcriptional regulatory CopG/NikR family. Ni(2+) serves as cofactor.

Functionally, transcriptional regulator. This Thermococcus kodakarensis (strain ATCC BAA-918 / JCM 12380 / KOD1) (Pyrococcus kodakaraensis (strain KOD1)) protein is Putative nickel-responsive regulator.